Here is a 602-residue protein sequence, read N- to C-terminus: Elongation factor 4 (602 aa).

Residues 8-190 (DLIRNFSIVA…AIVHRLPPPK (183 aa)) form the tr-type G domain. GTP contacts are provided by residues 20-25 (DHGKST) and 137-140 (NKID).

Belongs to the TRAFAC class translation factor GTPase superfamily. Classic translation factor GTPase family. LepA subfamily.

It localises to the cell inner membrane. It carries out the reaction GTP + H2O = GDP + phosphate + H(+). Functionally, required for accurate and efficient protein synthesis under certain stress conditions. May act as a fidelity factor of the translation reaction, by catalyzing a one-codon backward translocation of tRNAs on improperly translocated ribosomes. Back-translocation proceeds from a post-translocation (POST) complex to a pre-translocation (PRE) complex, thus giving elongation factor G a second chance to translocate the tRNAs correctly. Binds to ribosomes in a GTP-dependent manner. This chain is Elongation factor 4, found in Cereibacter sphaeroides (strain ATCC 17023 / DSM 158 / JCM 6121 / CCUG 31486 / LMG 2827 / NBRC 12203 / NCIMB 8253 / ATH 2.4.1.) (Rhodobacter sphaeroides).